The following is a 305-amino-acid chain: Dihydroorotate dehydrogenase B (NAD(+)), catalytic subunit (305 aa).

Residues Ser23 and 47-48 each bind FMN; that span reads KG. Residues Lys47 and 71 to 75 each bind substrate; that span reads NAIGL. Residues Asn101 and Asn129 each coordinate FMN. Asn129 lines the substrate pocket. Cys132 (nucleophile) is an active-site residue. FMN contacts are provided by Lys167 and Ile193. Residue 194 to 195 participates in substrate binding; sequence NT. FMN is bound by residues Gly219, 245 to 246, and 267 to 268; these read GG and GT.

It belongs to the dihydroorotate dehydrogenase family. Type 1 subfamily. As to quaternary structure, heterotetramer of 2 PyrK and 2 PyrD type B subunits. It depends on FMN as a cofactor.

It is found in the cytoplasm. The enzyme catalyses (S)-dihydroorotate + NAD(+) = orotate + NADH + H(+). It participates in pyrimidine metabolism; UMP biosynthesis via de novo pathway; orotate from (S)-dihydroorotate (NAD(+) route): step 1/1. Its function is as follows. Catalyzes the conversion of dihydroorotate to orotate with NAD(+) as electron acceptor. The protein is Dihydroorotate dehydrogenase B (NAD(+)), catalytic subunit (pyrD) of Geobacter metallireducens (strain ATCC 53774 / DSM 7210 / GS-15).